Reading from the N-terminus, the 154-residue chain is Protein X (154 aa).

The segment at Pro68–Phe117 is mitochondrial targeting sequence.

It belongs to the orthohepadnavirus protein X family. As to quaternary structure, may form homodimer. May interact with host CEBPA, CFLAR, CREB1, DDB1, E4F1, HBXIP, HSPD1/HSP60, NFKBIA, POLR2E and SMAD4. Interacts with host SMC5-SMC6 complex and induces its degradation. Interacts with host TRPC4AP; leading to prevent ubiquitination of TRPC4AP. Interacts with host PLSCR1; this interaction promotes ubiquitination and degradation of HBx and impairs HBx-mediated cell proliferation. A fraction may be phosphorylated in insect cells and HepG2 cells, a human hepatoblastoma cell line. Phosphorylated in vitro by host protein kinase C or mitogen-activated protein kinase. N-acetylated in insect cells.

It is found in the host cytoplasm. The protein localises to the host nucleus. The protein resides in the host mitochondrion. Functionally, multifunctional protein that plays a role in silencing host antiviral defenses and promoting viral transcription. Does not seem to be essential for HBV infection. May be directly involved in development of cirrhosis and liver cancer (hepatocellular carcinoma). Most of cytosolic activities involve modulation of cytosolic calcium. The effect on apoptosis is controversial depending on the cell types in which the studies have been conducted. May induce apoptosis by localizing in mitochondria and causing loss of mitochondrial membrane potential. May also modulate apoptosis by binding host CFLAR, a key regulator of the death-inducing signaling complex (DISC). Promotes viral transcription by using the host E3 ubiquitin ligase DDB1 to target the SMC5-SMC6 complex to proteasomal degradation. This host complex would otherwise bind to viral episomal DNA, and prevents its transcription. Moderately stimulates transcription of many different viral and cellular transcription elements. Promoters and enhancers stimulated by HBx contain DNA binding sites for NF-kappa-B, AP-1, AP-2, c-EBP, ATF/CREB, or the calcium-activated factor NF-AT. In Homo sapiens (Human), this protein is Protein X.